The chain runs to 154 residues: UPF0178 protein Gbem_2221 (154 aa).

This sequence belongs to the UPF0178 family.

This is UPF0178 protein Gbem_2221 from Citrifermentans bemidjiense (strain ATCC BAA-1014 / DSM 16622 / JCM 12645 / Bem) (Geobacter bemidjiensis).